A 254-amino-acid chain; its full sequence is Probable electron transfer flavoprotein subunit beta (254 aa).

This sequence belongs to the ETF beta-subunit/FixA family. As to quaternary structure, heterodimer of an alpha and a beta subunit. Requires FAD as cofactor. AMP is required as a cofactor.

The protein localises to the mitochondrion matrix. Functionally, the electron transfer flavoprotein serves as a specific electron acceptor for several dehydrogenases, including five acyl-CoA dehydrogenases, glutaryl-CoA and sarcosine dehydrogenase. It transfers the electrons to the main mitochondrial respiratory chain via ETF-ubiquinone oxidoreductase (ETF dehydrogenase). The chain is Probable electron transfer flavoprotein subunit beta from Schizosaccharomyces pombe (strain 972 / ATCC 24843) (Fission yeast).